The primary structure comprises 277 residues: Phosphate import ATP-binding protein PstB 1 (277 aa).

The region spanning 27–272 (LRVRDLAVSY…PSHELTAAYI (246 aa)) is the ABC transporter domain. 59–66 (GPSGCGKT) contacts ATP.

Belongs to the ABC transporter superfamily. Phosphate importer (TC 3.A.1.7) family. As to quaternary structure, the complex is composed of two ATP-binding proteins (PstB), two transmembrane proteins (PstC and PstA) and a solute-binding protein (PstS).

The protein resides in the cell inner membrane. It carries out the reaction phosphate(out) + ATP + H2O = ADP + 2 phosphate(in) + H(+). Part of the ABC transporter complex PstSACB involved in phosphate import. Responsible for energy coupling to the transport system. This is Phosphate import ATP-binding protein PstB 1 from Nitrosococcus oceani (strain ATCC 19707 / BCRC 17464 / JCM 30415 / NCIMB 11848 / C-107).